The primary structure comprises 348 residues: MDEWLAEFIKRTILKLPFSETATILKTWGFLTESELQTFTLRYPKEVTATEVVRFCEARNATLDHAAALDLVFNHAYSNKKTWTVYQMSKRLESENDLFDASEFKLQFKKSIHAVSKNVTINFKEFGEALWIRIAWGTHNSRPNQYKATFAVYHSQTPYVFITGLGKACQPLMCQALVIASKYSQIQEMELKSRCLESLKDIVFKRFNQPFSSHHSKPHEKALTPNIVDPRVTYENMREKDRVYHLTCETFGEGPLPKLELASYKLETMFKADSAMSGNLTAVNEPFRCVVKFSSPHLLEAIRSLAPAGIAEAPISTLLSCIPHKARNSFKITEKRSMHPSSSQPTNV.

Belongs to the CENP-N/CHL4 family.

Its subcellular location is the nucleus. It is found in the chromosome. It localises to the centromere. Probable component of a centromeric complex involved in assembly of kinetochore proteins, mitotic progression and chromosome segregation. The chain is Centromere protein N-B (cenpn-b) from Xenopus laevis (African clawed frog).